Here is a 158-residue protein sequence, read N- to C-terminus: Eukaryotic translation initiation factor 5A (158 aa).

Lysine 51 is subject to Hypusine.

It belongs to the eIF-5A family. Lys-51 undergoes hypusination, a unique post-translational modification that consists in the addition of a butylamino group from spermidine to lysine side chain, leading to the formation of the unusual amino acid hypusine. eIF-5As are the only known proteins to undergo this modification, which is essential for their function.

Its subcellular location is the cytoplasm. Its function is as follows. Translation factor that promotes translation elongation and termination, particularly upon ribosome stalling at specific amino acid sequence contexts. Binds between the exit (E) and peptidyl (P) site of the ribosome and promotes rescue of stalled ribosome: specifically required for efficient translation of polyproline-containing peptides as well as other motifs that stall the ribosome. Acts as a ribosome quality control (RQC) cofactor by joining the RQC complex to facilitate peptidyl transfer during CAT tailing step. The chain is Eukaryotic translation initiation factor 5A (ANB1) from Candida albicans (strain SC5314 / ATCC MYA-2876) (Yeast).